A 421-amino-acid polypeptide reads, in one-letter code: Carboxypeptidase A4 (421 aa).

Positions 1-16 (MRWILFIGALIGSSIC) are cleaved as a signal peptide. The propeptide at 17-113 (GQEKFFGDQV…EMQHNEGQER (97 aa)) is activation peptide. 8 residues coordinate a protein: proline 69, valine 71, asparagine 119, tyrosine 123, histidine 124, serine 125, glutamate 127, and phenylalanine 163. In terms of domain architecture, Peptidase M14 spans 122–416 (AYHSLEAIYH…LGLKTIMEHV (295 aa)). Zn(2+)-binding residues include histidine 181 and glutamate 184. 3 residues coordinate a protein: arginine 196, lysine 197, and serine 248. A disulfide bond links cysteine 250 and cysteine 273. An N-linked (GlcNAc...) asparagine glycan is attached at asparagine 260. Residue aspartate 270 participates in a protein binding. Residue histidine 308 coordinates Zn(2+). The Proton donor/acceptor role is filled by glutamate 382.

This sequence belongs to the peptidase M14 family. Monomer. Interacts with LXN. The cofactor is Zn(2+). In terms of tissue distribution, fetal expression in the adrenal gland, brain, heart, intestine, kidney, liver and lung. Except for fetal brain that shows no imprinting, expression was found preferentially from the maternal allele.

It is found in the secreted. Its activity is regulated as follows. Inhibited by interaction with the metallocarboxypeptidase inhibitor (MCPI) from N.versicolor that binds to the catalytic zinc ion. Also inhibited by interaction with the S.magnifica carboxypeptidase inhibitor SmCI that penetrates the active site groove and inhibits activity by emulating a C-terminal substrate. Additionally inhibited by a carboxypeptidase inhibitor from H.medicinalis (leech) and R.bursa (tick). Metalloprotease that cleaves hydrophobic C-terminal residues with a preference for -Phe, -Leu, -Ile, -Met, -Tyr and -Val. May function in peptide hormone and/or neuropeptide catabolism. The sequence is that of Carboxypeptidase A4 (CPA4) from Homo sapiens (Human).